Reading from the N-terminus, the 1416-residue chain is DNA-directed RNA polymerase subunit beta' (1416 aa).

Zn(2+) contacts are provided by Cys-68, Cys-70, Cys-83, and Cys-86. Mg(2+) contacts are provided by Asp-458, Asp-460, and Asp-462. Zn(2+) is bound by residues Cys-811, Cys-884, Cys-891, and Cys-894.

This sequence belongs to the RNA polymerase beta' chain family. The RNAP catalytic core consists of 2 alpha, 1 beta, 1 beta' and 1 omega subunit. When a sigma factor is associated with the core the holoenzyme is formed, which can initiate transcription. Mg(2+) is required as a cofactor. Zn(2+) serves as cofactor.

It catalyses the reaction RNA(n) + a ribonucleoside 5'-triphosphate = RNA(n+1) + diphosphate. In terms of biological role, DNA-dependent RNA polymerase catalyzes the transcription of DNA into RNA using the four ribonucleoside triphosphates as substrates. This is DNA-directed RNA polymerase subunit beta' from Francisella philomiragia subsp. philomiragia (strain ATCC 25017 / CCUG 19701 / FSC 153 / O#319-036).